The following is a 202-amino-acid chain: Proteasome subunit beta 1 (202 aa).

A propeptide (removed in mature form; by autocatalysis) is located at residue M1. The active-site Nucleophile is T2.

It belongs to the peptidase T1B family. The 20S proteasome core is composed of 14 alpha and 14 beta subunits that assemble into four stacked heptameric rings, resulting in a barrel-shaped structure. The two inner rings, each composed of seven catalytic beta subunits, are sandwiched by two outer rings, each composed of seven alpha subunits. The catalytic chamber with the active sites is on the inside of the barrel. Has a gated structure, the ends of the cylinder being occluded by the N-termini of the alpha-subunits. Is capped at one or both ends by the proteasome regulatory ATPase, PAN.

The protein localises to the cytoplasm. The catalysed reaction is Cleavage of peptide bonds with very broad specificity.. The formation of the proteasomal ATPase PAN-20S proteasome complex, via the docking of the C-termini of PAN into the intersubunit pockets in the alpha-rings, triggers opening of the gate for substrate entry. Interconversion between the open-gate and close-gate conformations leads to a dynamic regulation of the 20S proteasome proteolysis activity. Its function is as follows. Component of the proteasome core, a large protease complex with broad specificity involved in protein degradation. The sequence is that of Proteasome subunit beta 1 from Pyrobaculum aerophilum (strain ATCC 51768 / DSM 7523 / JCM 9630 / CIP 104966 / NBRC 100827 / IM2).